The chain runs to 118 residues: Aspartate 1-decarboxylase (118 aa).

The Schiff-base intermediate with substrate; via pyruvic acid role is filled by serine 25. At serine 25 the chain carries Pyruvic acid (Ser). Residue threonine 57 coordinates substrate. Tyrosine 58 functions as the Proton donor in the catalytic mechanism. Residue 73–75 (GAA) coordinates substrate.

The protein belongs to the PanD family. In terms of assembly, heterooctamer of four alpha and four beta subunits. Requires pyruvate as cofactor. In terms of processing, is synthesized initially as an inactive proenzyme, which is activated by self-cleavage at a specific serine bond to produce a beta-subunit with a hydroxyl group at its C-terminus and an alpha-subunit with a pyruvoyl group at its N-terminus.

The protein resides in the cytoplasm. It carries out the reaction L-aspartate + H(+) = beta-alanine + CO2. It functions in the pathway cofactor biosynthesis; (R)-pantothenate biosynthesis; beta-alanine from L-aspartate: step 1/1. Catalyzes the pyruvoyl-dependent decarboxylation of aspartate to produce beta-alanine. This is Aspartate 1-decarboxylase from Leptospira biflexa serovar Patoc (strain Patoc 1 / Ames).